Reading from the N-terminus, the 511-residue chain is Acidic amino acid decarboxylase GADL1 (511 aa).

The residue at position 323 (Lys323) is an N6-(pyridoxal phosphate)lysine.

This sequence belongs to the group II decarboxylase family. In terms of assembly, homodimer. Pyridoxal 5'-phosphate serves as cofactor.

The enzyme catalyses L-aspartate + H(+) = beta-alanine + CO2. The catalysed reaction is 3-sulfino-L-alanine + H(+) = hypotaurine + CO2. Catalyzes the decarboxylation of L-aspartate, 3-sulfino-L-alanine (cysteine sulfinic acid), and L-cysteate to beta-alanine, hypotaurine and taurine, respectively. The preferred substrate is L-aspartate. Does not exhibit any decarboxylation activity toward glutamate. The sequence is that of Acidic amino acid decarboxylase GADL1 (gadl1) from Xenopus tropicalis (Western clawed frog).